The primary structure comprises 398 residues: Putative molybdopterin biosynthesis protein MJ0666 (398 aa).

Belongs to the MoeA family.

Its pathway is cofactor biosynthesis; molybdopterin biosynthesis. The polypeptide is Putative molybdopterin biosynthesis protein MJ0666 (Methanocaldococcus jannaschii (strain ATCC 43067 / DSM 2661 / JAL-1 / JCM 10045 / NBRC 100440) (Methanococcus jannaschii)).